The sequence spans 155 residues: Endoribonuclease YbeY (155 aa).

His-114, His-118, and His-124 together coordinate Zn(2+).

The protein belongs to the endoribonuclease YbeY family. It depends on Zn(2+) as a cofactor.

The protein localises to the cytoplasm. Single strand-specific metallo-endoribonuclease involved in late-stage 70S ribosome quality control and in maturation of the 3' terminus of the 16S rRNA. This Photorhabdus laumondii subsp. laumondii (strain DSM 15139 / CIP 105565 / TT01) (Photorhabdus luminescens subsp. laumondii) protein is Endoribonuclease YbeY.